A 55-amino-acid chain; its full sequence is Antiviral protein GAP-31 (55 aa).

A disordered region spans residues 29-55; that stretch reads KPEGNSHGIPSLRKSSDDPGSSFVVAG.

Belongs to the ribosome-inactivating protein family. Type 1 RIP subfamily.

The catalysed reaction is Endohydrolysis of the N-glycosidic bond at one specific adenosine on the 28S rRNA.. Its function is as follows. Single-chain ribosome-inactivating protein, possessing high antiviral potency and low toxicity to normal cells in culture and to intact animals. Capable of inhibiting HIV-1 infection and replication. The polypeptide is Antiviral protein GAP-31 (Suregada multiflora (False lime)).